A 239-amino-acid polypeptide reads, in one-letter code: Ribonuclease Le2 (239 aa).

Intrachain disulfides connect cysteine 5–cysteine 22, cysteine 13–cysteine 58, cysteine 21–cysteine 126, cysteine 66–cysteine 118, and cysteine 191–cysteine 225. Active-site residues include histidine 51, glutamate 111, and histidine 115.

The protein belongs to the RNase T2 family.

It catalyses the reaction a ribonucleotidyl-ribonucleotide-RNA + H2O = a 3'-end 3'-phospho-ribonucleotide-RNA + a 5'-end dephospho-ribonucleoside-RNA + H(+). In terms of biological role, this is a base non-specific and adenylic acid preferential ribonuclease. In Lentinula edodes (Shiitake mushroom), this protein is Ribonuclease Le2.